We begin with the raw amino-acid sequence, 196 residues long: Chromophore lyase CpcS/CpeS 2 (196 aa).

This sequence belongs to the CpcS/CpeS biliprotein lyase family.

Covalently attaches a chromophore to Cys residue(s) of phycobiliproteins. This Trichodesmium erythraeum (strain IMS101) protein is Chromophore lyase CpcS/CpeS 2.